Reading from the N-terminus, the 637-residue chain is 1-deoxy-D-xylulose-5-phosphate synthase (637 aa).

Thiamine diphosphate-binding positions include H75 and 116–118 (AHS). Residue D147 coordinates Mg(2+). Thiamine diphosphate is bound by residues 148–149 (GA), N177, Y288, and E370. Residue N177 participates in Mg(2+) binding.

It belongs to the transketolase family. DXPS subfamily. In terms of assembly, homodimer. It depends on Mg(2+) as a cofactor. Thiamine diphosphate serves as cofactor.

The catalysed reaction is D-glyceraldehyde 3-phosphate + pyruvate + H(+) = 1-deoxy-D-xylulose 5-phosphate + CO2. It functions in the pathway metabolic intermediate biosynthesis; 1-deoxy-D-xylulose 5-phosphate biosynthesis; 1-deoxy-D-xylulose 5-phosphate from D-glyceraldehyde 3-phosphate and pyruvate: step 1/1. Functionally, catalyzes the acyloin condensation reaction between C atoms 2 and 3 of pyruvate and glyceraldehyde 3-phosphate to yield 1-deoxy-D-xylulose-5-phosphate (DXP). The protein is 1-deoxy-D-xylulose-5-phosphate synthase of Cupriavidus metallidurans (strain ATCC 43123 / DSM 2839 / NBRC 102507 / CH34) (Ralstonia metallidurans).